Consider the following 427-residue polypeptide: MTVSFEKTSDTKGTLSFSIDQETIKTGLDKAFNKVKANISVPGFRKGKISRQMFNKMYGEEALFEEALNAVLPTAYDAAVKEAAIEPVAQPKIDVAKMEKGSDWELTAEVVVKPTITLGDYKDLTVEVDATKEVTDEEVETRLTNAQNNLAELVVKETAAENGDTVVIDFVGSVDGVEFEGGKGSNHSLELGSGQFIPGFEEQLVGTKSGETVEVKVTFPENYQAEDLAGKEALFVTTVNEVKAKELPELDDELAKDIDEEVETLEELKAKFRKELEESKSEAYDDAVETAAIEAAVANAEIKEIPEEMIHEEVHRAMNEFLGGMQQQGISPEMYFQITGTSEDDLHKQYEADADKRVRTNLVIEAIAAAESFTTSDEEVKAEIEDLAGQYNMPVEQVEKLLPVDMLKHDIAMKKAVEVIATTAKVK.

The PPIase FKBP-type domain maps to 163 to 248; sequence GDTVVIDFVG…VNEVKAKELP (86 aa).

The protein belongs to the FKBP-type PPIase family. Tig subfamily.

Its subcellular location is the cytoplasm. It catalyses the reaction [protein]-peptidylproline (omega=180) = [protein]-peptidylproline (omega=0). In terms of biological role, involved in protein export. Acts as a chaperone by maintaining the newly synthesized protein in an open conformation. Functions as a peptidyl-prolyl cis-trans isomerase. This Lactococcus lactis subsp. cremoris (strain SK11) protein is Trigger factor.